We begin with the raw amino-acid sequence, 84 residues long: Cell division topological specificity factor (84 aa).

This sequence belongs to the MinE family.

Functionally, prevents the cell division inhibition by proteins MinC and MinD at internal division sites while permitting inhibition at polar sites. This ensures cell division at the proper site by restricting the formation of a division septum at the midpoint of the long axis of the cell. The sequence is that of Cell division topological specificity factor from Desulfotalea psychrophila (strain LSv54 / DSM 12343).